Consider the following 93-residue polypeptide: MKTLVLLSALVLLAFQVQADPIQNTDEETKTEEQPGEDDQAVSVSFGDPEGSSLQEESLRDLVCYCRKRGCKRRERMNGTCRKGHLMYTLCCR.

Residues Met-1–Gln-16 form the signal peptide. A propeptide spanning residues Val-17 to Ser-58 is cleaved from the precursor. Positions Ile-22–Glu-56 are disordered. 3 cysteine pairs are disulfide-bonded: Cys-64-Cys-92, Cys-66-Cys-81, and Cys-71-Cys-91.

Belongs to the alpha-defensin family. In terms of tissue distribution, paneth cells of the small bowel.

The protein localises to the secreted. Probably contributes to the antimicrobial barrier function of the small bowel mucosa. The polypeptide is Alpha-defensin 3 (Defa3) (Mus musculus (Mouse)).